The chain runs to 635 residues: 1-deoxy-D-xylulose-5-phosphate synthase (635 aa).

Thiamine diphosphate-binding positions include histidine 74 and 115–117 (AHS). Aspartate 146 provides a ligand contact to Mg(2+). Residues 147-148 (GA), asparagine 176, tyrosine 283, and glutamate 365 each bind thiamine diphosphate. Asparagine 176 is a binding site for Mg(2+).

It belongs to the transketolase family. DXPS subfamily. Homodimer. Requires Mg(2+) as cofactor. The cofactor is thiamine diphosphate.

It carries out the reaction D-glyceraldehyde 3-phosphate + pyruvate + H(+) = 1-deoxy-D-xylulose 5-phosphate + CO2. It participates in metabolic intermediate biosynthesis; 1-deoxy-D-xylulose 5-phosphate biosynthesis; 1-deoxy-D-xylulose 5-phosphate from D-glyceraldehyde 3-phosphate and pyruvate: step 1/1. Catalyzes the acyloin condensation reaction between C atoms 2 and 3 of pyruvate and glyceraldehyde 3-phosphate to yield 1-deoxy-D-xylulose-5-phosphate (DXP). In Paraburkholderia xenovorans (strain LB400), this protein is 1-deoxy-D-xylulose-5-phosphate synthase.